Consider the following 579-residue polypeptide: Probable N-acetylgalactosaminyltransferase 9 (579 aa).

Over 1–12 the chain is Cytoplasmic; it reads MLRYIIPRKKGT. Residues 13 to 30 form a helical; Signal-anchor for type II membrane protein membrane-spanning segment; the sequence is FVIAAFLTVAFFCIVAYH. Topologically, residues 31 to 579 are lumenal; that stretch reads RNDRRRTKFQ…KWNFIDPAKA (549 aa). A glycan (N-linked (GlcNAc...) asparagine) is linked at Asn-67. Intrachain disulfides connect Cys-123/Cys-356, Cys-347/Cys-427, Cys-464/Cys-483, Cys-507/Cys-520, and Cys-545/Cys-562. Residues 133–243 are catalytic subdomain A; that stretch reads LPKTSVIIIF…HGWLEPIVQR (111 aa). The substrate site is built by Asp-174 and Arg-204. Asp-227 is a binding site for Mn(2+). Position 228 (Ser-228) interacts with substrate. His-229 provides a ligand contact to Mn(2+). A catalytic subdomain B region spans residues 302–364; the sequence is YIRSPTMAGG…PCSHVGHIFR (63 aa). A substrate-binding site is contributed by Trp-333. Position 361 (His-361) interacts with Mn(2+). Substrate contacts are provided by Arg-364, His-367, and Tyr-369. A glycan (N-linked (GlcNAc...) asparagine) is linked at Asn-370. A Ricin B-type lectin domain is found at 450–574; it reads AYGALHTVVS…KDEHQKWNFI (125 aa).

It belongs to the glycosyltransferase 2 family. GalNAc-T subfamily. Mn(2+) is required as a cofactor.

The protein resides in the golgi apparatus membrane. It participates in protein modification; protein glycosylation. Functionally, probable glycopeptide transferase involved in O-linked oligosaccharide biosynthesis. Glycopeptide transferases catalyze the transfer of an N-acetyl-D-galactosamine residue to an already glycosylated peptide. In contrast to other members of the family, it does not act as a peptide transferase that transfers GalNAc onto serine or threonine residue on peptides that have been tested. Some peptide transferase activity is however not excluded, considering that its appropriate peptide substrate may remain unidentified. The chain is Probable N-acetylgalactosaminyltransferase 9 (gly-9) from Caenorhabditis elegans.